A 336-amino-acid polypeptide reads, in one-letter code: Holliday junction branch migration complex subunit RuvB (336 aa).

The interval 4-184 (ADRIISAIAK…FGIVQRLEFY (181 aa)) is large ATPase domain (RuvB-L). ATP-binding positions include isoleucine 23, arginine 24, glycine 65, lysine 68, threonine 69, threonine 70, 131–133 (EDY), arginine 174, tyrosine 184, and arginine 221. Threonine 69 contacts Mg(2+). The segment at 185–255 (SIEDLTSIVM…IAKAALAMLD (71 aa)) is small ATPAse domain (RuvB-S). The tract at residues 258 to 336 (QAGFDYLDRK…HFGLAKLADK (79 aa)) is head domain (RuvB-H). DNA is bound by residues arginine 294, arginine 313, and arginine 318.

It belongs to the RuvB family. As to quaternary structure, homohexamer. Forms an RuvA(8)-RuvB(12)-Holliday junction (HJ) complex. HJ DNA is sandwiched between 2 RuvA tetramers; dsDNA enters through RuvA and exits via RuvB. An RuvB hexamer assembles on each DNA strand where it exits the tetramer. Each RuvB hexamer is contacted by two RuvA subunits (via domain III) on 2 adjacent RuvB subunits; this complex drives branch migration. In the full resolvosome a probable DNA-RuvA(4)-RuvB(12)-RuvC(2) complex forms which resolves the HJ.

It localises to the cytoplasm. The enzyme catalyses ATP + H2O = ADP + phosphate + H(+). Functionally, the RuvA-RuvB-RuvC complex processes Holliday junction (HJ) DNA during genetic recombination and DNA repair, while the RuvA-RuvB complex plays an important role in the rescue of blocked DNA replication forks via replication fork reversal (RFR). RuvA specifically binds to HJ cruciform DNA, conferring on it an open structure. The RuvB hexamer acts as an ATP-dependent pump, pulling dsDNA into and through the RuvAB complex. RuvB forms 2 homohexamers on either side of HJ DNA bound by 1 or 2 RuvA tetramers; 4 subunits per hexamer contact DNA at a time. Coordinated motions by a converter formed by DNA-disengaged RuvB subunits stimulates ATP hydrolysis and nucleotide exchange. Immobilization of the converter enables RuvB to convert the ATP-contained energy into a lever motion, pulling 2 nucleotides of DNA out of the RuvA tetramer per ATP hydrolyzed, thus driving DNA branch migration. The RuvB motors rotate together with the DNA substrate, which together with the progressing nucleotide cycle form the mechanistic basis for DNA recombination by continuous HJ branch migration. Branch migration allows RuvC to scan DNA until it finds its consensus sequence, where it cleaves and resolves cruciform DNA. This Actinobacillus succinogenes (strain ATCC 55618 / DSM 22257 / CCUG 43843 / 130Z) protein is Holliday junction branch migration complex subunit RuvB.